A 283-amino-acid polypeptide reads, in one-letter code: Thymidylate synthase (283 aa).

R22 is a binding site for dUMP. C160 functions as the Nucleophile in the catalytic mechanism. DUMP is bound by residues 180 to 183, N191, and 221 to 223; these read RSCD and HIY. D183 provides a ligand contact to (6R)-5,10-methylene-5,6,7,8-tetrahydrofolate. S282 contacts (6R)-5,10-methylene-5,6,7,8-tetrahydrofolate.

It belongs to the thymidylate synthase family. Bacterial-type ThyA subfamily. As to quaternary structure, homodimer.

It is found in the cytoplasm. The catalysed reaction is dUMP + (6R)-5,10-methylene-5,6,7,8-tetrahydrofolate = 7,8-dihydrofolate + dTMP. It functions in the pathway pyrimidine metabolism; dTTP biosynthesis. Catalyzes the reductive methylation of 2'-deoxyuridine-5'-monophosphate (dUMP) to 2'-deoxythymidine-5'-monophosphate (dTMP) while utilizing 5,10-methylenetetrahydrofolate (mTHF) as the methyl donor and reductant in the reaction, yielding dihydrofolate (DHF) as a by-product. This enzymatic reaction provides an intracellular de novo source of dTMP, an essential precursor for DNA biosynthesis. The chain is Thymidylate synthase from Psychromonas ingrahamii (strain DSM 17664 / CCUG 51855 / 37).